The following is a 620-amino-acid chain: Sorbicillinoid biosynthetic cluster transcription factor 1 (620 aa).

The segment at residues 10-37 (CEECRRRKARCDRVRPQCGICADAGRTC) is a DNA-binding region (zn(2)-C6 fungal-type). Residues 285–308 (HDDETSPNENSGSCPSVSPSTTQN) are disordered. The span at 291-308 (PNENSGSCPSVSPSTTQN) shows a compositional bias: polar residues.

Its subcellular location is the nucleus. Transcription factor that acts as the main regulator of the gene cluster that mediates the biosynthesis of sorbicillinoids, a diverse group of yellow secondary metabolites that restrict growth of competing pathogenic fungi but not of bacteria. The chain is Sorbicillinoid biosynthetic cluster transcription factor 1 from Penicillium rubens (strain ATCC 28089 / DSM 1075 / NRRL 1951 / Wisconsin 54-1255) (Penicillium chrysogenum).